The primary structure comprises 658 residues: Translation factor GUF1, mitochondrial (658 aa).

The transit peptide at 1 to 40 directs the protein to the mitochondrion; it reads MRGCLQTVRWLTSAWQRPRSYSPLSRAAPCRFFNVSIPRN. In terms of domain architecture, tr-type G spans 60–240; the sequence is DRFRNFCIVA…TVVEQIPAPV (181 aa). Residues 69-76, 133-137, and 187-190 contribute to the GTP site; these read AHVDHGKS, DTPGH, and NKVD.

Belongs to the TRAFAC class translation factor GTPase superfamily. Classic translation factor GTPase family. LepA subfamily.

Its subcellular location is the mitochondrion inner membrane. The catalysed reaction is GTP + H2O = GDP + phosphate + H(+). Functionally, promotes mitochondrial protein synthesis. May act as a fidelity factor of the translation reaction, by catalyzing a one-codon backward translocation of tRNAs on improperly translocated ribosomes. Binds to mitochondrial ribosomes in a GTP-dependent manner. This is Translation factor GUF1, mitochondrial from Paracoccidioides lutzii (strain ATCC MYA-826 / Pb01) (Paracoccidioides brasiliensis).